The following is a 294-amino-acid chain: N-acetylmuramic acid 6-phosphate etherase (294 aa).

In terms of domain architecture, SIS spans 54–217 (VIQSFEEEGR…STASMIGVGK (164 aa)). Residue Glu-82 is the Proton donor of the active site. Glu-113 is an active-site residue.

This sequence belongs to the GCKR-like family. MurNAc-6-P etherase subfamily. Homodimer.

The catalysed reaction is N-acetyl-D-muramate 6-phosphate + H2O = N-acetyl-D-glucosamine 6-phosphate + (R)-lactate. It participates in amino-sugar metabolism; N-acetylmuramate degradation. Functionally, specifically catalyzes the cleavage of the D-lactyl ether substituent of MurNAc 6-phosphate, producing GlcNAc 6-phosphate and D-lactate. In Bacillus cereus (strain 03BB102), this protein is N-acetylmuramic acid 6-phosphate etherase.